Consider the following 262-residue polypeptide: 3-deoxy-manno-octulosonate cytidylyltransferase (262 aa).

The protein belongs to the KdsB family.

The protein resides in the cytoplasm. It catalyses the reaction 3-deoxy-alpha-D-manno-oct-2-ulosonate + CTP = CMP-3-deoxy-beta-D-manno-octulosonate + diphosphate. It functions in the pathway nucleotide-sugar biosynthesis; CMP-3-deoxy-D-manno-octulosonate biosynthesis; CMP-3-deoxy-D-manno-octulosonate from 3-deoxy-D-manno-octulosonate and CTP: step 1/1. Its pathway is bacterial outer membrane biogenesis; lipopolysaccharide biosynthesis. Its function is as follows. Activates KDO (a required 8-carbon sugar) for incorporation into bacterial lipopolysaccharide in Gram-negative bacteria. This is 3-deoxy-manno-octulosonate cytidylyltransferase from Koribacter versatilis (strain Ellin345).